Consider the following 433-residue polypeptide: GPI mannosyltransferase 2 (433 aa).

Residue methionine 1 is a topological domain, cytoplasmic. The helical transmembrane segment at 2–22 (IVGLTLYFVLFRSIQYLLVFL) threads the bilayer. At 23-109 (TPIRQFDTST…NNDSIYHALR (87 aa)) the chain is on the lumenal side. 2 N-linked (GlcNAc...) asparagine glycosylation sites follow: asparagine 69 and asparagine 101. Residues 110–130 (VGVAIENVLFYLSGIVLYFLT) traverse the membrane as a helical segment. The Cytoplasmic segment spans residues 131–161 (KKIFSQNIRQSQFARTIAKKTSLLFFLTSAA). The chain crosses the membrane as a helical span at residues 162-182 (GFLTSIYSEPLSFFFAFVGIW). At 183-215 (SRECSISVPVLGQFDISWRYWFPYSFISMACFT) the chain is on the lumenal side. The helical transmembrane segment at 216-236 (LASLNRSNCVLLGIYFIFDLI) threads the bilayer. Residues 237–243 (ELTKNRK) are Cytoplasmic-facing. Residues 244 to 264 (FVKAICFPLLSGSLMFSALLY) traverse the membrane as a helical segment. At 265–318 (QQYYLPYKTFCPQRGEWCKSQLFSSIFITKTSLYSYIQSHYWGVGLLKYWTPNN) the chain is on the lumenal side. The chain crosses the membrane as a helical span at residues 319-339 (IPNFLFAVPNIIILIYSSIYF). The Cytoplasmic portion of the chain corresponds to 340–350 (SKIYPSYNLKA). A helical membrane pass occupies residues 351 to 371 (LVWITRALVVIVCFFAHVQIL). Topologically, residues 372 to 409 (NRIASFLPLHLWYLADRLVKTSDPKKMENPKGDDKIVK) are lumenal. The chain crosses the membrane as a helical span at residues 410–430 (FYIYWLAFWIPLQTILFAAFL). The Cytoplasmic portion of the chain corresponds to 431–433 (PPA).

It belongs to the PIGV family. As to quaternary structure, part of the GPI mannosyltransferase 2 complex composed of GPI18 and PGA1.

It localises to the endoplasmic reticulum membrane. The protein operates within glycolipid biosynthesis; glycosylphosphatidylinositol-anchor biosynthesis. In terms of biological role, mannosyltransferase involved in glycosylphosphatidylinositol-anchor biosynthesis. Responsible for the transfer of the second mannose to the glycosylphosphatidylinositol during GPI precursor assembly. In Saccharomyces cerevisiae (strain ATCC 204508 / S288c) (Baker's yeast), this protein is GPI mannosyltransferase 2 (GPI18).